We begin with the raw amino-acid sequence, 190 residues long: Large ribosomal subunit protein bL17 (190 aa).

Residues 128–190 (KKTAGRKAAQ…VEENNEQNKA (63 aa)) form a disordered region. Residues 143–154 (ALAPAEETPAPT) show a composition bias toward low complexity. Acidic residues predominate over residues 179–190 (LAVEENNEQNKA).

Belongs to the bacterial ribosomal protein bL17 family. In terms of assembly, part of the 50S ribosomal subunit. Contacts protein L32.

This chain is Large ribosomal subunit protein bL17, found in Salinispora tropica (strain ATCC BAA-916 / DSM 44818 / JCM 13857 / NBRC 105044 / CNB-440).